We begin with the raw amino-acid sequence, 537 residues long: Woronin body major protein hexA (537 aa).

Composition is skewed to basic and acidic residues over residues 1–17 (MYSV…RDAQ), 59–70 (DRTSHVEREDTR), and 116–134 (DSRV…RSEN). 4 disordered regions span residues 1–20 (MYSV…QRTA), 59–79 (DRTS…PDPR), 116–200 (DSRV…KPVY), and 269–295 (PKPL…SRPS). The span at 135 to 144 (NAKQNKNKNN) shows a compositional bias: low complexity. A compositionally biased stretch (basic and acidic residues) spans 272 to 281 (LETRKGDSFS).

This sequence belongs to the eIF-5A family. Hex1 subfamily. In terms of assembly, forms oligomers. Self-assembles into hexagonal rods. Binds directly or indirectly to the Woronin body tether lah.

It localises to the cell septum. The protein resides in the cytoplasm. Functionally, major component of Woronin bodies, fungal-specific organelles that occlude septal pores in order to separate intact from damaged compartments. HexA binds directly or indirectly to the Woronin body tether that in turn is anchored at the rim of the septal pore. Woronin bodies are important for stress resistance and virulence. This Aspergillus fumigatus (strain ATCC MYA-4609 / CBS 101355 / FGSC A1100 / Af293) (Neosartorya fumigata) protein is Woronin body major protein hexA.